A 435-amino-acid polypeptide reads, in one-letter code: MDTASHSLVLLQQLNMQREFGFLCDCTVAIGDVYFKAHRAVLAAFSNYFKMIFIHQTSECIKIQPTDIQPDIFSYLLHIMYTGKGPKQIVDHSRLEEGIRFLHADYLSHIATEMNQVFSPETVQSSNLYGIQISTTQKTVVKQGLEVKEAPSSNSGNRAAVQGDHPQLQLSLAIGLDDGTADQQRACPATQALEEHQKPPVSIKQERCDPESVISQSHPSPSSEVTGPTFTENSVKIHLCHYCGERFDSRSNLRQHLHTHVSGSLPFGVPASILESNDLGEVHPLNENSEALECRRLSSFIVKENEQQPDHTNRGTTEPLQISQVSLISKDTEPVELNCNFSFSRKRKMSCTICGHKFPRKSQLLEHMYTHKGKSYRYNRCQRFGNALAQRFQPYCDSWSDVSLKSSRLSQEHLDLPCALESELTQENVDTILVE.

The region spanning 1–107 (MDTASHSLVL…GIRFLHADYL (107 aa)) is the BTB domain. Residues lysine 142, lysine 148, lysine 198, and lysine 204 each participate in a glycyl lysine isopeptide (Lys-Gly) (interchain with G-Cter in SUMO2) cross-link. Residues 238 to 260 (HLCHYCGERFDSRSNLRQHLHTH) form a C2H2-type 1 zinc finger. Residues lysine 303 and lysine 330 each participate in a glycyl lysine isopeptide (Lys-Gly) (interchain with G-Cter in SUMO2) cross-link. Residues 349 to 371 (MSCTICGHKFPRKSQLLEHMYTH) form a C2H2-type 2 zinc finger. A Glycyl lysine isopeptide (Lys-Gly) (interchain with G-Cter in SUMO2) cross-link involves residue lysine 405.

As to expression, expressed mainly in hematopoietic cells and testis.

The protein localises to the nucleus. May be involved in transcriptional regulation. The sequence is that of Zinc finger and BTB domain-containing protein 25 (ZBTB25) from Homo sapiens (Human).